Reading from the N-terminus, the 341-residue chain is Protein phosphatase methylesterase 1 (341 aa).

The tract at residues 1-24 is disordered; it reads MAFRKEELSQTLYENESEQSSETK. Polar residues predominate over residues 9-20; it reads SQTLYENESEQS. Residues Ser-153, Asp-178, and His-304 contribute to the active site.

Belongs to the AB hydrolase superfamily.

The enzyme catalyses [phosphatase 2A protein]-C-terminal L-leucine methyl ester + H2O = [phosphatase 2A protein]-C-terminal L-leucine + methanol + H(+). Its function is as follows. Demethylates proteins that have been reversibly carboxymethylated. Demethylates the phosphatase PP2A catalytic subunit. The polypeptide is Protein phosphatase methylesterase 1 (ppe1) (Schizosaccharomyces pombe (strain 972 / ATCC 24843) (Fission yeast)).